Reading from the N-terminus, the 339-residue chain is Heme A synthase (339 aa).

Transmembrane regions (helical) follow at residues 7–27 (VIIW…VGGI), 92–112 (HRFI…YFLI), 126–146 (ILLG…KSGL), 159–179 (LHLT…LDLI), 199–219 (AIII…AGLI), 254–274 (VQFV…FLTF), 291–311 (ALLI…LYSV), and 312–332 (PLWL…TTTY). His258 is a heme binding site. A heme-binding site is contributed by His319.

Belongs to the COX15/CtaA family. Type 2 subfamily. In terms of assembly, interacts with CtaB. Heme b serves as cofactor.

It is found in the cell membrane. It carries out the reaction Fe(II)-heme o + 2 A + H2O = Fe(II)-heme a + 2 AH2. Its pathway is porphyrin-containing compound metabolism; heme A biosynthesis; heme A from heme O: step 1/1. Functionally, catalyzes the conversion of heme O to heme A by two successive hydroxylations of the methyl group at C8. The first hydroxylation forms heme I, the second hydroxylation results in an unstable dihydroxymethyl group, which spontaneously dehydrates, resulting in the formyl group of heme A. In Flavobacterium psychrophilum (strain ATCC 49511 / DSM 21280 / CIP 103535 / JIP02/86), this protein is Heme A synthase.